Reading from the N-terminus, the 354-residue chain is Uroporphyrinogen decarboxylase (354 aa).

Substrate-binding positions include 27–31, aspartate 77, tyrosine 154, threonine 209, and histidine 327; that span reads RQAGR.

This sequence belongs to the uroporphyrinogen decarboxylase family. As to quaternary structure, homodimer.

The protein localises to the cytoplasm. It carries out the reaction uroporphyrinogen III + 4 H(+) = coproporphyrinogen III + 4 CO2. Its pathway is porphyrin-containing compound metabolism; protoporphyrin-IX biosynthesis; coproporphyrinogen-III from 5-aminolevulinate: step 4/4. In terms of biological role, catalyzes the decarboxylation of four acetate groups of uroporphyrinogen-III to yield coproporphyrinogen-III. The polypeptide is Uroporphyrinogen decarboxylase (Salmonella paratyphi A (strain ATCC 9150 / SARB42)).